The following is a 581-amino-acid chain: MEKVTNSDLKSSVDGGVVDVYGEDSATIEHNITPWSLSVSSGYSLLRDPRYNKGLAFTEKERDTHYLRGLLPPVVLDQKLQEKRLLNNIRQYQFPLQKYMALTELQERNERLFYKLLIDNVEELLPIVYTPTVGEACQKFGSIFRRPQGLFISLKDKGKILDVLKNWPERNIQVIVVTDGERILGLGDLGCQGMGIPVGKLALYSALGGVRPSACLPVTIDVGTNNEKLLNDEFYIGLRQKRATGQEYSELLNEFMSAVKQNYGEKVLIQFEDFANHNAFELLAKYSDTHLVFNDDIQGTASVVLAGLVSAQKLTNSPLAEHTFLFLGAGEAGTGIAELIALYMSKQMNASVEESRKKIWLVDSKGLIVNSRKDSLQDFKKPWAHEHEPVKDLLGAIKAIKPTVLIGSSGVGRSFTKEVIEAMSSINERPLIMALSNPTTQSECTAEEAYTWSKGRAIFASGSPFDPVEYEGKVFVSTQANNAYIFPGFGLGLVISGAIRVHDDMLLAAAEALAGQVSKENYEKGMIYPSFSSIRKISAQIAANVATKAYELGLAGRLPRPKDIVKCAESSMYSPTYRLYR.

Residue Y129 is the Proton donor of the active site. R182 is a binding site for NADP(+). K200 serves as the catalytic Proton acceptor. Residues E272, D273, and D296 each coordinate a divalent metal cation. NADP(+) is bound by residues D296, 325 to 341, and N437; that span reads LFLG…ELIA.

This sequence belongs to the malic enzymes family. In terms of assembly, homohexamers and homooctamers. Mg(2+) serves as cofactor. Requires Mn(2+) as cofactor. As to expression, specifically expressed in roots (only in steles of secondary roots).

It localises to the cytoplasm. The catalysed reaction is (S)-malate + NADP(+) = pyruvate + CO2 + NADPH. The enzyme catalyses oxaloacetate + H(+) = pyruvate + CO2. This is NADP-dependent malic enzyme 1 (NADP-ME1) from Arabidopsis thaliana (Mouse-ear cress).